Reading from the N-terminus, the 174-residue chain is Ribosome maturation factor RimM (174 aa).

One can recognise a PRC barrel domain in the interval 99–172; the sequence is ADEFFYHDVI…RLVIRPIAGL (74 aa).

Belongs to the RimM family. In terms of assembly, binds ribosomal protein uS19.

Its subcellular location is the cytoplasm. In terms of biological role, an accessory protein needed during the final step in the assembly of 30S ribosomal subunit, possibly for assembly of the head region. Essential for efficient processing of 16S rRNA. May be needed both before and after RbfA during the maturation of 16S rRNA. It has affinity for free ribosomal 30S subunits but not for 70S ribosomes. The chain is Ribosome maturation factor RimM from Chloroflexus aurantiacus (strain ATCC 29366 / DSM 635 / J-10-fl).